Consider the following 375-residue polypeptide: Probable UDP-N-acetylglucosamine 2-epimerase (375 aa).

Belongs to the UDP-N-acetylglucosamine 2-epimerase family.

Its subcellular location is the cytoplasm. The catalysed reaction is UDP-N-acetyl-alpha-D-glucosamine = UDP-N-acetyl-alpha-D-mannosamine. It participates in glycan metabolism; exopolysaccharide EPS I biosynthesis. Functionally, may be involved in synthesis of N-acetyltrideoxygalactose, a component of exopolysaccharide EPS I which functions as a virulence factor. In Ralstonia solanacearum (Pseudomonas solanacearum), this protein is Probable UDP-N-acetylglucosamine 2-epimerase (epsC).